A 58-amino-acid chain; its full sequence is Small ribosomal subunit protein bS21 (58 aa).

It belongs to the bacterial ribosomal protein bS21 family.

The polypeptide is Small ribosomal subunit protein bS21 (Synechococcus sp. (strain CC9605)).